Here is a 514-residue protein sequence, read N- to C-terminus: Probable cytochrome P450 6w1 (514 aa).

Heme is bound at residue Cys450.

Belongs to the cytochrome P450 family. The cofactor is heme.

Its subcellular location is the endoplasmic reticulum membrane. The protein resides in the microsome membrane. In terms of biological role, may be involved in the metabolism of insect hormones and in the breakdown of synthetic insecticides. The sequence is that of Probable cytochrome P450 6w1 (Cyp6w1) from Drosophila melanogaster (Fruit fly).